The following is a 442-amino-acid chain: Zuotin (442 aa).

The segment at 49-84 is disordered; sequence RQRHGRTFSEDERLEVKNKVQEEVKEESEDEEEDPA. The residue at position 55 (threonine 55) is a Phosphothreonine. The span at 55 to 71 shows a compositional bias: basic and acidic residues; the sequence is TFSEDERLEVKNKVQEE. Phosphoserine is present on residues serine 57 and serine 76. Positions 72-83 are enriched in acidic residues; sequence VKEESEDEEEDP. Residues 97 to 167 enclose the J domain; that stretch reads DHYAVLGLSK…VRRRQFDSVD (71 aa). Disordered stretches follow at residues 242–270 and 306–331; these read DGES…DNAR and GARE…EAAA. The span at 316–330 shows a compositional bias: basic and acidic residues; sequence KKKEEEERRAAEEAA.

RAC is a heterodimer of the Hsp70/DnaK-type chaperone ssz1 and the Hsp40/DnaJ-type chaperone zuo1. RAC associates with ribosomes via zuo1.

Its subcellular location is the cytoplasm. In terms of biological role, component of the ribosome-associated complex (RAC), a heterodimeric chaperone complex involved in regulation of accurate translation termination and in folding or maintaining nascent polypeptides in a folding-competent state. RAC stimulates the ATPase activity of the ribosome-associated pool of Hsp70-type chaperones SSB1/SSB2 that bind to the nascent polypeptide chain. This Schizosaccharomyces pombe (strain 972 / ATCC 24843) (Fission yeast) protein is Zuotin (zuo1).